A 475-amino-acid chain; its full sequence is Sensor histidine kinase GlrK (475 aa).

At 1 to 13 (MKRWPVFPRSLRQ) the chain is on the cytoplasmic side. Residues 14–34 (LVMLAFLLILLPLLVLAWQAW) traverse the membrane as a helical segment. The Periplasmic portion of the chain corresponds to 35–173 (QSLNALSDQA…LQREIAERGQ (139 aa)). Residues 174–194 (YFGWQSLVLFLVSLVMVLLFT) traverse the membrane as a helical segment. Topologically, residues 195–475 (RMIIGPVKNI…IELPSSKNTK (281 aa)) are cytoplasmic. One can recognise a Histidine kinase domain in the interval 256-472 (HLSHELKTPL…CFRIELPSSK (217 aa)). At histidine 259 the chain carries Phosphohistidine; by autocatalysis.

Autophosphorylated.

The protein localises to the cell inner membrane. The enzyme catalyses ATP + protein L-histidine = ADP + protein N-phospho-L-histidine.. Functionally, member of the two-component regulatory system GlrR/GlrK that up-regulates transcription of the glmY sRNA when cells enter the stationary growth phase. Activates GlrR by phosphorylation. The polypeptide is Sensor histidine kinase GlrK (glrK) (Escherichia coli (strain K12)).